The following is a 61-amino-acid chain: Large ribosomal subunit protein eL37 (61 aa).

The Zn(2+) site is built by cysteine 20, cysteine 23, cysteine 35, and cysteine 38. The segment at cysteine 20–cysteine 38 adopts a C4-type zinc-finger fold.

This sequence belongs to the eukaryotic ribosomal protein eL37 family. The cofactor is Zn(2+).

Functionally, binds to the 23S rRNA. The chain is Large ribosomal subunit protein eL37 (rpl37e) from Methanocaldococcus jannaschii (strain ATCC 43067 / DSM 2661 / JAL-1 / JCM 10045 / NBRC 100440) (Methanococcus jannaschii).